Here is a 484-residue protein sequence, read N- to C-terminus: Zinc metalloproteinase homolog-disintegrin albolatin (484 aa).

The first 20 residues, 1 to 20 (MIQVLLVTICLAVFPYQGSS), serve as a signal peptide directing secretion. The propeptide occupies 21-191 (IILESGNVND…KTSQLNLPLL (171 aa)). N-linked (GlcNAc...) asparagine glycans are attached at residues Asn-80, Asn-251, and Asn-301. Positions 194-392 (RCIELVMVAD…WTSYCLYNEP (199 aa)) constitute a Peptidase M12B domain. Disulfide bonds link Cys-305-Cys-387, Cys-345-Cys-369, Cys-347-Cys-352, Cys-403-Cys-422, Cys-414-Cys-432, Cys-416-Cys-427, Cys-426-Cys-449, Cys-440-Cys-446, Cys-445-Cys-470, and Cys-458-Cys-477. Residues 400–484 (PPVCGNYYLE…GDCPWIGYYG (85 aa)) form the Disintegrin domain. A Cell attachment site; atypical (KGD) motif is present at residues 462–464 (KGD).

It belongs to the venom metalloproteinase (M12B) family. P-II subfamily. P-IIb sub-subfamily. Homodimer; disulfide-linked (disintegrin). Expressed by the venom gland.

Its subcellular location is the secreted. Functionally, the function of this complete protein has not been studied, but it may be similar to the function of the disintegrin domain. A recombinant protein of this domain (409-484) inhibits collagen-induced human platelet aggregation, without having effect on ADP-induced aggregation. It may act either by blocking the binding of fibrinogen to the platelet receptor GPIIb/GPIIIa (ITGA2B/ITGB3) or by blocking the binding of collagen to the integrin alpha-2/beta-1 complex (ITGA2/ITGB1). This Trimeresurus albolabris (White-lipped pit viper) protein is Zinc metalloproteinase homolog-disintegrin albolatin.